We begin with the raw amino-acid sequence, 230 residues long: Leucyl/phenylalanyl-tRNA--protein transferase (230 aa).

It belongs to the L/F-transferase family.

It localises to the cytoplasm. It catalyses the reaction N-terminal L-lysyl-[protein] + L-leucyl-tRNA(Leu) = N-terminal L-leucyl-L-lysyl-[protein] + tRNA(Leu) + H(+). The enzyme catalyses N-terminal L-arginyl-[protein] + L-leucyl-tRNA(Leu) = N-terminal L-leucyl-L-arginyl-[protein] + tRNA(Leu) + H(+). The catalysed reaction is L-phenylalanyl-tRNA(Phe) + an N-terminal L-alpha-aminoacyl-[protein] = an N-terminal L-phenylalanyl-L-alpha-aminoacyl-[protein] + tRNA(Phe). In terms of biological role, functions in the N-end rule pathway of protein degradation where it conjugates Leu, Phe and, less efficiently, Met from aminoacyl-tRNAs to the N-termini of proteins containing an N-terminal arginine or lysine. The protein is Leucyl/phenylalanyl-tRNA--protein transferase of Proteus mirabilis (strain HI4320).